We begin with the raw amino-acid sequence, 280 residues long: Phosphatidylserine decarboxylase proenzyme (280 aa).

Catalysis depends on charge relay system; for autoendoproteolytic cleavage activity residues Asp86, His143, and Ser246. Ser246 (schiff-base intermediate with substrate; via pyruvic acid; for decarboxylase activity) is an active-site residue. Position 246 is a pyruvic acid (Ser); by autocatalysis (Ser246).

Belongs to the phosphatidylserine decarboxylase family. PSD-B subfamily. Prokaryotic type I sub-subfamily. In terms of assembly, heterodimer of a large membrane-associated beta subunit and a small pyruvoyl-containing alpha subunit. Pyruvate is required as a cofactor. Is synthesized initially as an inactive proenzyme. Formation of the active enzyme involves a self-maturation process in which the active site pyruvoyl group is generated from an internal serine residue via an autocatalytic post-translational modification. Two non-identical subunits are generated from the proenzyme in this reaction, and the pyruvate is formed at the N-terminus of the alpha chain, which is derived from the carboxyl end of the proenzyme. The autoendoproteolytic cleavage occurs by a canonical serine protease mechanism, in which the side chain hydroxyl group of the serine supplies its oxygen atom to form the C-terminus of the beta chain, while the remainder of the serine residue undergoes an oxidative deamination to produce ammonia and the pyruvoyl prosthetic group on the alpha chain. During this reaction, the Ser that is part of the protease active site of the proenzyme becomes the pyruvoyl prosthetic group, which constitutes an essential element of the active site of the mature decarboxylase.

It is found in the cell membrane. The enzyme catalyses a 1,2-diacyl-sn-glycero-3-phospho-L-serine + H(+) = a 1,2-diacyl-sn-glycero-3-phosphoethanolamine + CO2. Its pathway is phospholipid metabolism; phosphatidylethanolamine biosynthesis; phosphatidylethanolamine from CDP-diacylglycerol: step 2/2. Functionally, catalyzes the formation of phosphatidylethanolamine (PtdEtn) from phosphatidylserine (PtdSer). This chain is Phosphatidylserine decarboxylase proenzyme, found in Brevibacillus brevis (strain 47 / JCM 6285 / NBRC 100599).